Consider the following 128-residue polypeptide: Thor profilin (128 aa).

Belongs to the Asgard profilin family.

It is found in the cytoplasm. The protein resides in the cytoskeleton. In terms of biological role, has no profilin activity against rabbit actin. The polypeptide is Thor profilin (Thorarchaeota archaeon (strain AB_25)).